We begin with the raw amino-acid sequence, 282 residues long: Ribosomal RNA small subunit methyltransferase A (282 aa).

6 residues coordinate S-adenosyl-L-methionine: asparagine 28, leucine 30, glycine 55, glutamate 77, aspartate 103, and asparagine 123.

It belongs to the class I-like SAM-binding methyltransferase superfamily. rRNA adenine N(6)-methyltransferase family. RsmA subfamily.

The protein localises to the cytoplasm. The enzyme catalyses adenosine(1518)/adenosine(1519) in 16S rRNA + 4 S-adenosyl-L-methionine = N(6)-dimethyladenosine(1518)/N(6)-dimethyladenosine(1519) in 16S rRNA + 4 S-adenosyl-L-homocysteine + 4 H(+). In terms of biological role, specifically dimethylates two adjacent adenosines (A1518 and A1519) in the loop of a conserved hairpin near the 3'-end of 16S rRNA in the 30S particle. May play a critical role in biogenesis of 30S subunits. This Afipia carboxidovorans (strain ATCC 49405 / DSM 1227 / KCTC 32145 / OM5) (Oligotropha carboxidovorans) protein is Ribosomal RNA small subunit methyltransferase A.